Here is an 86-residue protein sequence, read N- to C-terminus: Large ribosomal subunit protein bL31B (86 aa).

This sequence belongs to the bacterial ribosomal protein bL31 family. Type B subfamily. Part of the 50S ribosomal subunit.

The chain is Large ribosomal subunit protein bL31B from Salmonella agona (strain SL483).